The primary structure comprises 397 residues: Tryptophan synthase beta chain (397 aa).

An N6-(pyridoxal phosphate)lysine modification is found at Lys87.

This sequence belongs to the TrpB family. In terms of assembly, tetramer of two alpha and two beta chains. It depends on pyridoxal 5'-phosphate as a cofactor.

The enzyme catalyses (1S,2R)-1-C-(indol-3-yl)glycerol 3-phosphate + L-serine = D-glyceraldehyde 3-phosphate + L-tryptophan + H2O. It participates in amino-acid biosynthesis; L-tryptophan biosynthesis; L-tryptophan from chorismate: step 5/5. Its function is as follows. The beta subunit is responsible for the synthesis of L-tryptophan from indole and L-serine. The sequence is that of Tryptophan synthase beta chain from Escherichia coli O127:H6 (strain E2348/69 / EPEC).